Reading from the N-terminus, the 191-residue chain is Potassium-transporting ATPase KdpC subunit (191 aa).

A helical membrane pass occupies residues 11-31 (LFVLLTAVTGVVYPLAVTGIA).

Belongs to the KdpC family. In terms of assembly, the system is composed of three essential subunits: KdpA, KdpB and KdpC.

The protein resides in the cell inner membrane. Functionally, part of the high-affinity ATP-driven potassium transport (or Kdp) system, which catalyzes the hydrolysis of ATP coupled with the electrogenic transport of potassium into the cytoplasm. This subunit acts as a catalytic chaperone that increases the ATP-binding affinity of the ATP-hydrolyzing subunit KdpB by the formation of a transient KdpB/KdpC/ATP ternary complex. The chain is Potassium-transporting ATPase KdpC subunit from Dechloromonas aromatica (strain RCB).